The sequence spans 365 residues: UDP-N-acetylglucosamine--N-acetylmuramyl-(pentapeptide) pyrophosphoryl-undecaprenol N-acetylglucosamine transferase (365 aa).

Residues 20–22 (TGG), asparagine 132, arginine 168, serine 196, isoleucine 253, and glutamine 298 contribute to the UDP-N-acetyl-alpha-D-glucosamine site.

This sequence belongs to the glycosyltransferase 28 family. MurG subfamily.

The protein localises to the cell inner membrane. The catalysed reaction is di-trans,octa-cis-undecaprenyl diphospho-N-acetyl-alpha-D-muramoyl-L-alanyl-D-glutamyl-meso-2,6-diaminopimeloyl-D-alanyl-D-alanine + UDP-N-acetyl-alpha-D-glucosamine = di-trans,octa-cis-undecaprenyl diphospho-[N-acetyl-alpha-D-glucosaminyl-(1-&gt;4)]-N-acetyl-alpha-D-muramoyl-L-alanyl-D-glutamyl-meso-2,6-diaminopimeloyl-D-alanyl-D-alanine + UDP + H(+). It functions in the pathway cell wall biogenesis; peptidoglycan biosynthesis. In terms of biological role, cell wall formation. Catalyzes the transfer of a GlcNAc subunit on undecaprenyl-pyrophosphoryl-MurNAc-pentapeptide (lipid intermediate I) to form undecaprenyl-pyrophosphoryl-MurNAc-(pentapeptide)GlcNAc (lipid intermediate II). This Ralstonia nicotianae (strain ATCC BAA-1114 / GMI1000) (Ralstonia solanacearum) protein is UDP-N-acetylglucosamine--N-acetylmuramyl-(pentapeptide) pyrophosphoryl-undecaprenol N-acetylglucosamine transferase.